Here is a 320-residue protein sequence, read N- to C-terminus: 4-hydroxy-3-methylbut-2-enyl diphosphate reductase (320 aa).

Residue Cys-13 coordinates [4Fe-4S] cluster. His-41 and His-75 together coordinate (2E)-4-hydroxy-3-methylbut-2-enyl diphosphate. Dimethylallyl diphosphate-binding residues include His-41 and His-75. 2 residues coordinate isopentenyl diphosphate: His-41 and His-75. Cys-97 is a [4Fe-4S] cluster binding site. A (2E)-4-hydroxy-3-methylbut-2-enyl diphosphate-binding site is contributed by His-125. His-125 serves as a coordination point for dimethylallyl diphosphate. Residue His-125 coordinates isopentenyl diphosphate. Glu-127 serves as the catalytic Proton donor. Residue Thr-168 participates in (2E)-4-hydroxy-3-methylbut-2-enyl diphosphate binding. Residue Cys-225 coordinates [4Fe-4S] cluster. Positions 253, 254, 255, and 302 each coordinate (2E)-4-hydroxy-3-methylbut-2-enyl diphosphate. The dimethylallyl diphosphate site is built by Ser-253, Ser-254, Asn-255, and Ser-302. Isopentenyl diphosphate contacts are provided by Ser-253, Ser-254, Asn-255, and Ser-302.

The protein belongs to the IspH family. Requires [4Fe-4S] cluster as cofactor.

It catalyses the reaction isopentenyl diphosphate + 2 oxidized [2Fe-2S]-[ferredoxin] + H2O = (2E)-4-hydroxy-3-methylbut-2-enyl diphosphate + 2 reduced [2Fe-2S]-[ferredoxin] + 2 H(+). The enzyme catalyses dimethylallyl diphosphate + 2 oxidized [2Fe-2S]-[ferredoxin] + H2O = (2E)-4-hydroxy-3-methylbut-2-enyl diphosphate + 2 reduced [2Fe-2S]-[ferredoxin] + 2 H(+). It functions in the pathway isoprenoid biosynthesis; dimethylallyl diphosphate biosynthesis; dimethylallyl diphosphate from (2E)-4-hydroxy-3-methylbutenyl diphosphate: step 1/1. It participates in isoprenoid biosynthesis; isopentenyl diphosphate biosynthesis via DXP pathway; isopentenyl diphosphate from 1-deoxy-D-xylulose 5-phosphate: step 6/6. Functionally, catalyzes the conversion of 1-hydroxy-2-methyl-2-(E)-butenyl 4-diphosphate (HMBPP) into a mixture of isopentenyl diphosphate (IPP) and dimethylallyl diphosphate (DMAPP). Acts in the terminal step of the DOXP/MEP pathway for isoprenoid precursor biosynthesis. This Chlorobium luteolum (strain DSM 273 / BCRC 81028 / 2530) (Pelodictyon luteolum) protein is 4-hydroxy-3-methylbut-2-enyl diphosphate reductase.